A 248-amino-acid chain; its full sequence is Ferric nitrobindin-like protein (248 aa).

2 stretches are compositionally biased toward polar residues: residues 1–25 (MSSD…TNSG) and 32–43 (QAVNLAAEQSKS). Residues 1–49 (MSSDKANNQSPDQGANTPAESTNSGPKLDGNQAVNLAAEQSKSTADKNL) form a disordered region. A GXWXGXG motif is present at residues 82–88 (GVWRGQG). The segment at 118-147 (SRTWKINPPAEEGAEADGDEASAESAGEPE) is disordered. Over residues 129-139 (EGAEADGDEAS) the composition is skewed to acidic residues.

Belongs to the nitrobindin family.

The polypeptide is Ferric nitrobindin-like protein (Corynebacterium urealyticum (strain ATCC 43042 / DSM 7109)).